A 2144-amino-acid polypeptide reads, in one-letter code: HEAT repeat-containing protein 1 (2144 aa).

N-acetylmethionine is present on methionine 1. Residue threonine 2 is modified to N-acetylthreonine; in HEAT repeat-containing protein 1, N-terminally processed. Serine 516 is subject to Phosphoserine. Residues 913–951 (ASISSPVVTSLLINLGSPVKEVRRAAIQCLQALSGVASP) form an HEAT 1 repeat. A disordered region spans residues 1170–1191 (KAKPLGTVQQKRRQKMQQKKSQ). Position 1190 is a phosphoserine (serine 1190). One copy of the HEAT 2 repeat lies at 1347–1385 (NKTVKMVIPALIQSDSGDSIEVSRNVEEIVVKIISVFVD). Serine 1492 bears the Phosphoserine mark. HEAT repeat units lie at residues 1594-1632 (LLPTETFIPVIRGLVGNPLPSVRRKALDLLNNKLQQNIS), 1730-1770 (IPQL…VVET), and 2100-2138 (IVLLPESIPFLAELMEDECEEVEHQCQKTIQQLETVLGE).

This sequence belongs to the HEATR1/UTP10 family. Part of the small subunit (SSU) processome, composed of more than 70 proteins and the RNA chaperone small nucleolar RNA (snoRNA) U3. Interacts with MYC; the interaction is required for localization of MYC to the nucleolus.

It localises to the nucleus. Its subcellular location is the nucleolus. In terms of biological role, ribosome biogenesis factor; required for recruitment of Myc to nucleoli. Involved in nucleolar processing of pre-18S ribosomal RNA. Required for optimal pre-ribosomal RNA transcription by RNA polymerase I. Part of the small subunit (SSU) processome, first precursor of the small eukaryotic ribosomal subunit. During the assembly of the SSU processome in the nucleolus, many ribosome biogenesis factors, an RNA chaperone and ribosomal proteins associate with the nascent pre-rRNA and work in concert to generate RNA folding, modifications, rearrangements and cleavage as well as targeted degradation of pre-ribosomal RNA by the RNA exosome. Involved in neuronal-lineage cell proliferation. The chain is HEAT repeat-containing protein 1 from Homo sapiens (Human).